We begin with the raw amino-acid sequence, 461 residues long: Asparagine--tRNA ligase (461 aa).

It belongs to the class-II aminoacyl-tRNA synthetase family. As to quaternary structure, homodimer.

The protein localises to the cytoplasm. It catalyses the reaction tRNA(Asn) + L-asparagine + ATP = L-asparaginyl-tRNA(Asn) + AMP + diphosphate + H(+). The chain is Asparagine--tRNA ligase from Geobacter metallireducens (strain ATCC 53774 / DSM 7210 / GS-15).